The primary structure comprises 178 residues: ATP synthase subunit b, chloroplastic (178 aa).

A helical membrane pass occupies residues 34–50 (LAILTGGIFYLGSNALS).

The protein belongs to the ATPase B chain family. F-type ATPases have 2 components, F(1) - the catalytic core - and F(0) - the membrane proton channel. F(1) has five subunits: alpha(3), beta(3), gamma(1), delta(1), epsilon(1). F(0) has four main subunits: a(1), b(1), b'(1) and c(10-14). The alpha and beta chains form an alternating ring which encloses part of the gamma chain. F(1) is attached to F(0) by a central stalk formed by the gamma and epsilon chains, while a peripheral stalk is formed by the delta, b and b' chains.

It localises to the plastid. The protein localises to the chloroplast thylakoid membrane. F(1)F(0) ATP synthase produces ATP from ADP in the presence of a proton or sodium gradient. F-type ATPases consist of two structural domains, F(1) containing the extramembraneous catalytic core and F(0) containing the membrane proton channel, linked together by a central stalk and a peripheral stalk. During catalysis, ATP synthesis in the catalytic domain of F(1) is coupled via a rotary mechanism of the central stalk subunits to proton translocation. Functionally, component of the F(0) channel, it forms part of the peripheral stalk, linking F(1) to F(0). This chain is ATP synthase subunit b, chloroplastic, found in Ochrosphaera neapolitana.